The primary structure comprises 675 residues: DNA ligase (675 aa).

Residues 33–37 (DAEYD), 82–83 (SL), and E115 contribute to the NAD(+) site. K117 serves as the catalytic N6-AMP-lysine intermediate. NAD(+) contacts are provided by R138, E175, K293, and K317. Residues C411, C414, C429, and C435 each contribute to the Zn(2+) site. A BRCT domain is found at 594-675 (IADNPLKDKT…LIGYFTTIVS (82 aa)).

This sequence belongs to the NAD-dependent DNA ligase family. LigA subfamily. Mg(2+) serves as cofactor. The cofactor is Mn(2+).

The catalysed reaction is NAD(+) + (deoxyribonucleotide)n-3'-hydroxyl + 5'-phospho-(deoxyribonucleotide)m = (deoxyribonucleotide)n+m + AMP + beta-nicotinamide D-nucleotide.. In terms of biological role, DNA ligase that catalyzes the formation of phosphodiester linkages between 5'-phosphoryl and 3'-hydroxyl groups in double-stranded DNA using NAD as a coenzyme and as the energy source for the reaction. It is essential for DNA replication and repair of damaged DNA. The sequence is that of DNA ligase from Glaesserella parasuis serovar 5 (strain SH0165) (Haemophilus parasuis).